The sequence spans 288 residues: Bifunctional protein FolD (288 aa).

NADP(+)-binding positions include 166 to 168 (GRS), serine 191, and isoleucine 232.

It belongs to the tetrahydrofolate dehydrogenase/cyclohydrolase family. In terms of assembly, homodimer.

The enzyme catalyses (6R)-5,10-methylene-5,6,7,8-tetrahydrofolate + NADP(+) = (6R)-5,10-methenyltetrahydrofolate + NADPH. It catalyses the reaction (6R)-5,10-methenyltetrahydrofolate + H2O = (6R)-10-formyltetrahydrofolate + H(+). It functions in the pathway one-carbon metabolism; tetrahydrofolate interconversion. Catalyzes the oxidation of 5,10-methylenetetrahydrofolate to 5,10-methenyltetrahydrofolate and then the hydrolysis of 5,10-methenyltetrahydrofolate to 10-formyltetrahydrofolate. The chain is Bifunctional protein FolD from Rickettsia massiliae (strain Mtu5).